The following is a 713-amino-acid chain: F-box/WD repeat-containing protein 7 (713 aa).

Residues 1–150 are disordered; it reads MNQELLSVGS…DEHTHNSNVT (150 aa). Residue serine 26 is modified to Phosphoserine. Over residues 46 to 55 the composition is skewed to basic and acidic residues; it reads RHQEEEHTAR. The span at 69–84 shows a compositional bias: polar residues; sequence QNDSQQGQVEENNNRF. Over residues 87–135 the composition is skewed to acidic residues; the sequence is VDEDSSGNQEEQEEDEEHAGEQEEEEEEEEEEEEEEEMDQESDDFDQSD. Positions 94–136 form a coiled coil; sequence NQEEQEEDEEHAGEQEEEEEEEEEEEEEEEMDQESDDFDQSDD. Over residues 136-145 the composition is skewed to basic and acidic residues; the sequence is DSSREDEHTH. Residue threonine 211 is modified to Phosphothreonine. Serine 233 carries the phosphoserine modification. Residues 284-330 form the F-box domain; it reads RDFISLLPKELALYVLSFLEPKDLLQAAQTCRYWRILAEDNLLWREK. WD repeat units follow at residues 384–424, 426–462, 465–504, 506–542, 545–584, 586–624, and 628–665; these read GHDD…RTLV, HTGG…CIHT, GHTS…HVLM, HVAA…CLHT, GHTN…HTLT, HQSL…QTLQ, and KHQS…FIRN.

As to quaternary structure, homodimer; homodimerization plays a role in substrate binding and/or ubiquitination and degradation. Component of the SCF(FBXW7) complex consisting of CUL1, RBX1, SKP1 and FBXW7. Interacts (via F-box domain) with SKP1. Interacts (via F-box domain) with pseudophosphatase STYX; the interaction is direct and prevents FBXW7 interaction with SKP1. Interacts with cyclin-E (CCNE1 or CCNE2). Interacts with PSEN1. Forms a trimeric complex with NOTCH1 and SGK1. Interacts with NOTCH1 intracellular domain/NICD and NOTCH4 intracellular domain/NICD. Interacts with NOTCH2 intracellular domain (N2ICD). Interacts with MYC (when phosphorylated). Interacts with USP28, counteracting ubiquitination of MYC. Interacts (when phosphorylated at Thr-211) with PIN1, disrupting FBXW7 dimerization and promoting FBXW7 autoubiquitination and degradation. Interacts with UBE2QL1. Interacts with FAM83D; promotes FBXW7 degradation. Interacts with MYCN; FBXW7 competes with AURKA for binding to unphosphorylated MYCN but not for binding to phosphorylated MYCN. Interacts with JUN. Found in a complex with JUN and PRR7. Interacts with JUN and PRR7; the interaction inhibits ubiquitination-mediated JUN degradation, promoting its phosphorylation and transcriptional activity. Interacts with NFE2L1. Interacts with NR1D1. Interacts with RICTOR; mediates RICTOR ubiquitination and degradation. Phosphorylation at Thr-211 promotes interaction with PIN1, leading to disrupt FBXW7 dimerization and promoting FBXW7 autoubiquitination and degradation. Phosphorylated by ATM at Ser-26 in response to DNA damage, promoting recruitment to DNA damage sites and 'Lys-63'-linked ubiquitination of phosphorylated XRCC4. In terms of processing, ubiquitinated: autoubiquitinates following phosphorylation at Thr-211 and subsequent interaction with PIN1. Ubiquitination leads to its degradation.

It localises to the nucleus. It is found in the nucleoplasm. The protein localises to the chromosome. It participates in protein modification; protein ubiquitination. Substrate recognition component of a SCF (SKP1-CUL1-F-box protein) E3 ubiquitin-protein ligase complex which mediates the ubiquitination and subsequent proteasomal degradation of target proteins. Recognizes and binds phosphorylated sites/phosphodegrons within target proteins and thereafter brings them to the SCF complex for ubiquitination. Identified substrates include cyclin-E (CCNE1 or CCNE2), JUN, MYC, NOTCH1 released notch intracellular domain (NICD), NOTCH2, MCL1, MLST8, RICTOR and probably PSEN1. Acts as a negative regulator of JNK signaling by binding to phosphorylated JUN and promoting its ubiquitination and subsequent degradation. SCF(FBXW7) complex mediates the ubiquitination and subsequent degradation of NFE2L1. Involved in bone homeostasis and negative regulation of osteoclast differentiation. Regulates the amplitude of the cyclic expression of hepatic core clock genes and genes involved in lipid and glucose metabolism via ubiquitination and proteasomal degradation of their transcriptional repressor NR1D1; CDK1-dependent phosphorylation of NR1D1 is necessary for SCF(FBXW7)-mediated ubiquitination. Also able to promote 'Lys-63'-linked ubiquitination in response to DNA damage. The SCF(FBXW7) complex facilitates double-strand break repair following phosphorylation by ATM: phosphorylation promotes localization to sites of double-strand breaks and 'Lys-63'-linked ubiquitination of phosphorylated XRCC4, enhancing DNA non-homologous end joining. This Rattus norvegicus (Rat) protein is F-box/WD repeat-containing protein 7.